The sequence spans 271 residues: Formamidopyrimidine-DNA glycosylase (271 aa).

Residue Pro-2 is the Schiff-base intermediate with DNA of the active site. The active-site Proton donor is the Glu-3. Lys-57 functions as the Proton donor; for beta-elimination activity in the catalytic mechanism. 3 residues coordinate DNA: His-90, Arg-109, and Lys-151. The segment at 236–270 (HVYGRGGETCTQCGHLLSEIKLGQRATVFCSLCQK) adopts an FPG-type zinc-finger fold. Catalysis depends on Arg-260, which acts as the Proton donor; for delta-elimination activity.

It belongs to the FPG family. Monomer. Zn(2+) is required as a cofactor.

The enzyme catalyses Hydrolysis of DNA containing ring-opened 7-methylguanine residues, releasing 2,6-diamino-4-hydroxy-5-(N-methyl)formamidopyrimidine.. It catalyses the reaction 2'-deoxyribonucleotide-(2'-deoxyribose 5'-phosphate)-2'-deoxyribonucleotide-DNA = a 3'-end 2'-deoxyribonucleotide-(2,3-dehydro-2,3-deoxyribose 5'-phosphate)-DNA + a 5'-end 5'-phospho-2'-deoxyribonucleoside-DNA + H(+). Involved in base excision repair of DNA damaged by oxidation or by mutagenic agents. Acts as a DNA glycosylase that recognizes and removes damaged bases. Has a preference for oxidized purines, such as 7,8-dihydro-8-oxoguanine (8-oxoG). Has AP (apurinic/apyrimidinic) lyase activity and introduces nicks in the DNA strand. Cleaves the DNA backbone by beta-delta elimination to generate a single-strand break at the site of the removed base with both 3'- and 5'-phosphates. This is Formamidopyrimidine-DNA glycosylase from Shewanella halifaxensis (strain HAW-EB4).